Consider the following 371-residue polypeptide: 4-hydroxy-3-methylbut-2-en-1-yl diphosphate synthase (flavodoxin) (371 aa).

The [4Fe-4S] cluster site is built by Cys-270, Cys-273, Cys-305, and Glu-312.

This sequence belongs to the IspG family. The cofactor is [4Fe-4S] cluster.

The enzyme catalyses (2E)-4-hydroxy-3-methylbut-2-enyl diphosphate + oxidized [flavodoxin] + H2O + 2 H(+) = 2-C-methyl-D-erythritol 2,4-cyclic diphosphate + reduced [flavodoxin]. It functions in the pathway isoprenoid biosynthesis; isopentenyl diphosphate biosynthesis via DXP pathway; isopentenyl diphosphate from 1-deoxy-D-xylulose 5-phosphate: step 5/6. Converts 2C-methyl-D-erythritol 2,4-cyclodiphosphate (ME-2,4cPP) into 1-hydroxy-2-methyl-2-(E)-butenyl 4-diphosphate. This chain is 4-hydroxy-3-methylbut-2-en-1-yl diphosphate synthase (flavodoxin), found in Shewanella pealeana (strain ATCC 700345 / ANG-SQ1).